The chain runs to 428 residues: 3-phosphoshikimate 1-carboxyvinyltransferase (428 aa).

Positions 20, 21, and 25 each coordinate 3-phosphoshikimate. Lys-20 provides a ligand contact to phosphoenolpyruvate. 2 residues coordinate phosphoenolpyruvate: Gly-92 and Arg-120. Ser-166, Gln-168, Asp-314, and Lys-341 together coordinate 3-phosphoshikimate. Gln-168 provides a ligand contact to phosphoenolpyruvate. Asp-314 acts as the Proton acceptor in catalysis. Phosphoenolpyruvate-binding residues include Arg-345 and Arg-387.

This sequence belongs to the EPSP synthase family. In terms of assembly, monomer.

It is found in the cytoplasm. The catalysed reaction is 3-phosphoshikimate + phosphoenolpyruvate = 5-O-(1-carboxyvinyl)-3-phosphoshikimate + phosphate. It participates in metabolic intermediate biosynthesis; chorismate biosynthesis; chorismate from D-erythrose 4-phosphate and phosphoenolpyruvate: step 6/7. In terms of biological role, catalyzes the transfer of the enolpyruvyl moiety of phosphoenolpyruvate (PEP) to the 5-hydroxyl of shikimate-3-phosphate (S3P) to produce enolpyruvyl shikimate-3-phosphate and inorganic phosphate. The protein is 3-phosphoshikimate 1-carboxyvinyltransferase of Listeria innocua serovar 6a (strain ATCC BAA-680 / CLIP 11262).